A 361-amino-acid chain; its full sequence is Probable lipid desaturase ADS3.2, chloroplastic (361 aa).

The N-terminal 57 residues, 1-57 (MMSLSTTLKPLSHFSPFVKRHNPKTNNTLFTLDTHNFTNSFWSKRGGSVSHRKHTVV), are a transit peptide targeting the chloroplast. The next 2 membrane-spanning stretches (helical) occupy residues 99 to 118 (LVIF…YFSW) and 122 to 139 (WVFP…TLSY). Positions 140 to 145 (HRNLSH) match the Histidine box-1 motif. Positions 177 to 181 (HRYHH) match the Histidine box-2 motif. Residues 246-266 (FLFYFCGGMPLLVWGIGITIA) traverse the membrane as a helical segment. The Histidine box-3 motif lies at 309 to 313 (HNNHH).

The protein belongs to the fatty acid desaturase type 1 family. The cofactor is Fe(2+).

It localises to the plastid. The protein resides in the chloroplast membrane. It participates in lipid metabolism; polyunsaturated fatty acid biosynthesis. The polypeptide is Probable lipid desaturase ADS3.2, chloroplastic (Arabidopsis thaliana (Mouse-ear cress)).